The primary structure comprises 406 residues: Phosphopentomutase (406 aa).

6 residues coordinate Mn(2+): Asp-10, Asp-305, His-310, Asp-346, His-347, and His-358.

The protein belongs to the phosphopentomutase family. The cofactor is Mn(2+).

Its subcellular location is the cytoplasm. It carries out the reaction 2-deoxy-alpha-D-ribose 1-phosphate = 2-deoxy-D-ribose 5-phosphate. The enzyme catalyses alpha-D-ribose 1-phosphate = D-ribose 5-phosphate. It participates in carbohydrate degradation; 2-deoxy-D-ribose 1-phosphate degradation; D-glyceraldehyde 3-phosphate and acetaldehyde from 2-deoxy-alpha-D-ribose 1-phosphate: step 1/2. Functionally, isomerase that catalyzes the conversion of deoxy-ribose 1-phosphate (dRib-1-P) and ribose 1-phosphate (Rib-1-P) to deoxy-ribose 5-phosphate (dRib-5-P) and ribose 5-phosphate (Rib-5-P), respectively. In Allorhizobium ampelinum (strain ATCC BAA-846 / DSM 112012 / S4) (Agrobacterium vitis (strain S4)), this protein is Phosphopentomutase.